A 186-amino-acid polypeptide reads, in one-letter code: Large ribosomal subunit protein uL5 (186 aa).

This sequence belongs to the universal ribosomal protein uL5 family. Part of the 50S ribosomal subunit; contacts the 5S rRNA and probably tRNA. Forms a bridge to the 30S subunit in the 70S ribosome.

Its function is as follows. This is one of the proteins that bind and probably mediate the attachment of the 5S RNA into the large ribosomal subunit, where it forms part of the central protuberance. In the 70S ribosome it contacts protein S13 of the 30S subunit (bridge B1b), connecting the 2 subunits; this bridge is implicated in subunit movement. May contact the P site tRNA; the 5S rRNA and some of its associated proteins might help stabilize positioning of ribosome-bound tRNAs. This chain is Large ribosomal subunit protein uL5, found in Methanopyrus kandleri (strain AV19 / DSM 6324 / JCM 9639 / NBRC 100938).